A 234-amino-acid polypeptide reads, in one-letter code: Phosphoribosylformylglycinamidine synthase subunit PurQ (234 aa).

The region spanning 6-234 (VGVVVFPGSN…ESLFRSLTGV (229 aa)) is the Glutamine amidotransferase type-1 domain. Cysteine 89 acts as the Nucleophile in catalysis. Active-site residues include histidine 206 and glutamate 208.

As to quaternary structure, part of the FGAM synthase complex composed of 1 PurL, 1 PurQ and 2 PurS subunits.

It localises to the cytoplasm. The enzyme catalyses N(2)-formyl-N(1)-(5-phospho-beta-D-ribosyl)glycinamide + L-glutamine + ATP + H2O = 2-formamido-N(1)-(5-O-phospho-beta-D-ribosyl)acetamidine + L-glutamate + ADP + phosphate + H(+). It catalyses the reaction L-glutamine + H2O = L-glutamate + NH4(+). It participates in purine metabolism; IMP biosynthesis via de novo pathway; 5-amino-1-(5-phospho-D-ribosyl)imidazole from N(2)-formyl-N(1)-(5-phospho-D-ribosyl)glycinamide: step 1/2. In terms of biological role, part of the phosphoribosylformylglycinamidine synthase complex involved in the purines biosynthetic pathway. Catalyzes the ATP-dependent conversion of formylglycinamide ribonucleotide (FGAR) and glutamine to yield formylglycinamidine ribonucleotide (FGAM) and glutamate. The FGAM synthase complex is composed of three subunits. PurQ produces an ammonia molecule by converting glutamine to glutamate. PurL transfers the ammonia molecule to FGAR to form FGAM in an ATP-dependent manner. PurS interacts with PurQ and PurL and is thought to assist in the transfer of the ammonia molecule from PurQ to PurL. The polypeptide is Phosphoribosylformylglycinamidine synthase subunit PurQ (Chlorobium chlorochromatii (strain CaD3)).